The primary structure comprises 213 residues: Putative glutathione-dependent formaldehyde-activating enzyme (213 aa).

Positions 19–165 (FPGGTLKCLC…FRELGLETYD (147 aa)) constitute a CENP-V/GFA domain. Zn(2+) is bound by residues Cys-26, Cys-28, Cys-47, Cys-49, Cys-52, Cys-94, and Cys-97.

The protein belongs to the Gfa family. Requires Zn(2+) as cofactor.

It catalyses the reaction S-(hydroxymethyl)glutathione = glutathione + formaldehyde. It functions in the pathway one-carbon metabolism; formaldehyde degradation; formate from formaldehyde (glutathione route): step 1/3. Its function is as follows. Catalyzes the condensation of formaldehyde and glutathione to S-hydroxymethylglutathione. The polypeptide is Putative glutathione-dependent formaldehyde-activating enzyme (Podospora anserina (strain S / ATCC MYA-4624 / DSM 980 / FGSC 10383) (Pleurage anserina)).